The chain runs to 314 residues: Malate dehydrogenase (314 aa).

NAD(+) is bound by residues 12–17 (GAGNIG) and aspartate 36. Substrate-binding residues include arginine 85 and arginine 91. NAD(+) contacts are provided by residues asparagine 98 and 121 to 123 (VTN). Substrate-binding residues include asparagine 123 and arginine 154. The active-site Proton acceptor is the histidine 178.

The protein belongs to the LDH/MDH superfamily. MDH type 3 family.

The catalysed reaction is (S)-malate + NAD(+) = oxaloacetate + NADH + H(+). Catalyzes the reversible oxidation of malate to oxaloacetate. This is Malate dehydrogenase from Wolbachia pipientis subsp. Culex pipiens (strain wPip).